Here is a 435-residue protein sequence, read N- to C-terminus: D-amino acid dehydrogenase (435 aa).

3–17 (VIVLGGGVLGVSTAW) is a binding site for FAD.

The protein belongs to the DadA oxidoreductase family. The cofactor is FAD.

It catalyses the reaction a D-alpha-amino acid + A + H2O = a 2-oxocarboxylate + AH2 + NH4(+). It functions in the pathway amino-acid degradation; D-alanine degradation; NH(3) and pyruvate from D-alanine: step 1/1. Its function is as follows. Oxidative deamination of D-amino acids. The polypeptide is D-amino acid dehydrogenase (Chromobacterium violaceum (strain ATCC 12472 / DSM 30191 / JCM 1249 / CCUG 213 / NBRC 12614 / NCIMB 9131 / NCTC 9757 / MK)).